A 512-amino-acid chain; its full sequence is Glutathione-binding protein GsiB (512 aa).

A signal peptide spans Met-1–Ala-26.

This sequence belongs to the bacterial solute-binding protein 5 family. The complex is composed of two ATP-binding proteins (GsiA), two transmembrane proteins (GsiC and GsiD) and a solute-binding protein (GsiB). In the presence of glutathione, interacts with the transmembrane proteins GsiC and GsiD.

The protein localises to the periplasm. Part of the ABC transporter complex GsiABCD involved in glutathione import. Binds glutathione. This is Glutathione-binding protein GsiB from Escherichia coli (strain K12).